The chain runs to 160 residues: Phosphopantetheine adenylyltransferase (160 aa).

Residue Ser-9 participates in substrate binding. ATP is bound by residues 9–10 (SF) and His-17. Substrate contacts are provided by Lys-41, Leu-73, and Lys-87. ATP-binding positions include 88 to 90 (GLR), Glu-98, and 123 to 129 (YSYLSSS).

This sequence belongs to the bacterial CoaD family. In terms of assembly, homohexamer. The cofactor is Mg(2+).

The protein resides in the cytoplasm. It catalyses the reaction (R)-4'-phosphopantetheine + ATP + H(+) = 3'-dephospho-CoA + diphosphate. The protein operates within cofactor biosynthesis; coenzyme A biosynthesis; CoA from (R)-pantothenate: step 4/5. Reversibly transfers an adenylyl group from ATP to 4'-phosphopantetheine, yielding dephospho-CoA (dPCoA) and pyrophosphate. This chain is Phosphopantetheine adenylyltransferase, found in Clostridium tetani (strain Massachusetts / E88).